The following is a 279-amino-acid chain: Prepilin leader peptidase/N-methyltransferase (279 aa).

Topologically, residues 1-16 (MDDLREFAQLFPAWWF) are periplasmic. The chain crosses the membrane as a helical span at residues 17 to 35 (GALGVLGLIVGSFLNVVIY). The Cytoplasmic segment spans residues 36–104 (RLPIMLERRW…RSRCCHQSVS (69 aa)). Residues 105–123 (VQYPLVEVITMLAFLAAGL) form a helical membrane-spanning segment. Residues 124 to 130 (LWLPGMA) lie on the Periplasmic side of the membrane. A helical transmembrane segment spans residues 131–149 (LWGALILLSFLLVLTVIDI). Topologically, residues 150 to 163 (KTLLLPDELTLSLL) are cytoplasmic. Residues 164 to 182 (WMGLLFNLSGTFVSLNDAV) traverse the membrane as a helical segment. The Periplasmic segment spans residues 183–185 (VGA). The chain crosses the membrane as a helical span at residues 186–204 (MAGYLSLWLLYWAFKYATG). The Cytoplasmic portion of the chain corresponds to 205–214 (KEALGYGDFK). The helical transmembrane segment at 215-233 (LLAALGAWLGWQALPNLVL) threads the bilayer. Topologically, residues 234–236 (VAA) are periplasmic. Residues 237 to 254 (LSGLVVTLIWRGLRKEDT) form a helical membrane-spanning segment. Topologically, residues 255–257 (AKP) are cytoplasmic. Residues 258 to 276 (LAFGPWLAIGGVFGMIMNG) form a helical membrane-spanning segment. At 277–279 (FNL) the chain is on the periplasmic side.

It belongs to the peptidase A24 family.

It is found in the cell inner membrane. The enzyme catalyses Typically cleaves a -Gly-|-Phe- bond to release an N-terminal, basic peptide of 5-8 residues from type IV prepilin, and then N-methylates the new N-terminal amino group, the methyl donor being S-adenosyl-L-methionine.. In terms of biological role, plays a role in type II pseudopili formation by proteolytically removing the leader sequence from substrate proteins and subsequently monomethylating the alpha-amino group of the newly exposed N-terminal phenylalanine. Substrates include proteins required for biogenesis of the type II general secretory apparatus. This is Prepilin leader peptidase/N-methyltransferase (outO) from Pectobacterium carotovorum subsp. carotovorum (Erwinia carotovora subsp. carotovora).